Consider the following 259-residue polypeptide: Phosphatidylserine decarboxylase proenzyme (259 aa).

The active-site Schiff-base intermediate with substrate; via pyruvic acid is the S183. S183 bears the Pyruvic acid (Ser); by autocatalysis mark.

Belongs to the phosphatidylserine decarboxylase family. PSD-A subfamily. As to quaternary structure, heterodimer of a large membrane-associated beta subunit and a small pyruvoyl-containing alpha subunit. It depends on pyruvate as a cofactor. Post-translationally, is synthesized initially as an inactive proenzyme. Formation of the active enzyme involves a self-maturation process in which the active site pyruvoyl group is generated from an internal serine residue via an autocatalytic post-translational modification. Two non-identical subunits are generated from the proenzyme in this reaction, and the pyruvate is formed at the N-terminus of the alpha chain, which is derived from the carboxyl end of the proenzyme. The post-translation cleavage follows an unusual pathway, termed non-hydrolytic serinolysis, in which the side chain hydroxyl group of the serine supplies its oxygen atom to form the C-terminus of the beta chain, while the remainder of the serine residue undergoes an oxidative deamination to produce ammonia and the pyruvoyl prosthetic group on the alpha chain.

The protein resides in the cell membrane. The enzyme catalyses a 1,2-diacyl-sn-glycero-3-phospho-L-serine + H(+) = a 1,2-diacyl-sn-glycero-3-phosphoethanolamine + CO2. The protein operates within phospholipid metabolism; phosphatidylethanolamine biosynthesis; phosphatidylethanolamine from CDP-diacylglycerol: step 2/2. Functionally, catalyzes the formation of phosphatidylethanolamine (PtdEtn) from phosphatidylserine (PtdSer). This Neisseria gonorrhoeae (strain ATCC 700825 / FA 1090) protein is Phosphatidylserine decarboxylase proenzyme.